The sequence spans 451 residues: Chromosomal replication initiator protein DnaA (451 aa).

The interval 1–77 (MTENEQIFWN…EVYNAQISVD (77 aa)) is domain I, interacts with DnaA modulators. Positions 77–110 (DYVFEEDLMIEQNQTKINQKPKQQALNSLPTVTS) are domain II. The segment at 111–329 (DLNPKYSFEN…GALKDISLVA (219 aa)) is domain III, AAA+ region. ATP contacts are provided by G155, G157, K158, and T159. The domain IV, binds dsDNA stretch occupies residues 330–451 (NFKQIDTITV…EIETIKNKIK (122 aa)).

The protein belongs to the DnaA family. In terms of assembly, oligomerizes as a right-handed, spiral filament on DNA at oriC.

Its subcellular location is the cytoplasm. Plays an essential role in the initiation and regulation of chromosomal replication. ATP-DnaA binds to the origin of replication (oriC) to initiate formation of the DNA replication initiation complex once per cell cycle. Binds the DnaA box (a 9 base pair repeat at the origin) and separates the double-stranded (ds)DNA. Forms a right-handed helical filament on oriC DNA; dsDNA binds to the exterior of the filament while single-stranded (ss)DNA is stabiized in the filament's interior. The ATP-DnaA-oriC complex binds and stabilizes one strand of the AT-rich DNA unwinding element (DUE), permitting loading of DNA polymerase. After initiation quickly degrades to an ADP-DnaA complex that is not apt for DNA replication. Binds acidic phospholipids. This is Chromosomal replication initiator protein DnaA from Streptococcus pyogenes serotype M4 (strain MGAS10750).